The sequence spans 337 residues: Putative 2-aminoethylphosphonate-binding periplasmic protein (337 aa).

The N-terminal stretch at 1 to 21 (MKLSRLALLSVFALASAPSWA) is a signal peptide.

This sequence belongs to the bacterial solute-binding protein 1 family.

The protein localises to the periplasm. Functionally, probably part of the PhnSTUV complex (TC 3.A.1.11.5) involved in 2-aminoethylphosphonate import. The chain is Putative 2-aminoethylphosphonate-binding periplasmic protein (phnS) from Salmonella typhi.